The chain runs to 462 residues: Cytochrome c biogenesis protein CcsB (462 aa).

A run of 3 helical transmembrane segments spans residues 30 to 50, 89 to 109, and 175 to 195; these read LRVA…GTVI, TWWY…CTFR, and IGPI…IWGA.

Belongs to the Ccs1/CcsB family. As to quaternary structure, may interact with CcsA.

It is found in the cellular thylakoid membrane. Functionally, required during biogenesis of c-type cytochromes (cytochrome c6 and cytochrome f) at the step of heme attachment. This is Cytochrome c biogenesis protein CcsB from Picosynechococcus sp. (strain ATCC 27264 / PCC 7002 / PR-6) (Agmenellum quadruplicatum).